Here is an 816-residue protein sequence, read N- to C-terminus: Transducer protein Htr18 (816 aa).

A run of 2 helical transmembrane segments spans residues 21 to 41 (VVIVTIMLVLVGVGVFTTQAV) and 282 to 302 (NIVVLIVTAVAGLGALVLVIG). The 54-residue stretch at 303–356 (RDALTALTDMSDRAEAIAAGDIDTAIEETTRIDEVGDLRRSFRDIQEYLQTVAG) folds into the HAMP 1 domain. The segment at 399 to 425 (DAQETAEQSRKEAEQSREEAEALAAAL) is disordered. Residues 405 to 418 (EQSRKEAEQSREEA) show a composition bias toward basic and acidic residues. The region spanning 423–476 (AALESQAQDIRETVEHAADGDLTQRLETDTDHESMAAIATALNSLLEELEGTIH) is the HAMP 2 domain. Positions 495–731 (SAEEVKRASG…EVVTMVDEVG (237 aa)) constitute a Methyl-accepting transducer domain. The segment at 790–816 (GGAENTTGAFVRSASTDHSRDATHHDT) is disordered. Over residues 793–803 (ENTTGAFVRSA) the composition is skewed to polar residues. Residues 804-816 (STDHSRDATHHDT) are compositionally biased toward basic and acidic residues.

Belongs to the methyl-accepting chemotaxis (MCP) protein family. In terms of processing, methylated by CheR.

It is found in the cell membrane. Potentially involved in chemo- or phototactic signal transduction. The sequence is that of Transducer protein Htr18 (htr18) from Halobacterium salinarum (strain ATCC 29341 / DSM 671 / R1).